We begin with the raw amino-acid sequence, 673 residues long: eEF1A lysine and N-terminal methyltransferase homolog (673 aa).

This sequence belongs to the methyltransferase superfamily.

The catalysed reaction is L-lysyl-[protein] + S-adenosyl-L-methionine = N(6)-methyl-L-lysyl-[protein] + S-adenosyl-L-homocysteine + H(+). The enzyme catalyses N(6)-methyl-L-lysyl-[protein] + S-adenosyl-L-methionine = N(6),N(6)-dimethyl-L-lysyl-[protein] + S-adenosyl-L-homocysteine + H(+). It carries out the reaction N-terminal glycyl-L-lysyl-L-glutamyl-[protein] + 3 S-adenosyl-L-methionine = N-terminal N,N,N-trimethyl-glycyl-L-lysyl-L-glutamyl-[protein] + 3 S-adenosyl-L-homocysteine + 3 H(+). In terms of biological role, dual methyltransferase. It catalyzes N-terminal methylation of target proteins via its C-terminus. It catalyzes dimethylation on lysine residues of target proteins via its N-terminus. The chain is eEF1A lysine and N-terminal methyltransferase homolog from Drosophila pseudoobscura pseudoobscura (Fruit fly).